Here is a 485-residue protein sequence, read N- to C-terminus: Glutamyl-tRNA(Gln) amidotransferase subunit A (485 aa).

Residues Lys79 and Ser154 each act as charge relay system in the active site. Residue Ser178 is the Acyl-ester intermediate of the active site.

Belongs to the amidase family. GatA subfamily. Heterotrimer of A, B and C subunits.

It catalyses the reaction L-glutamyl-tRNA(Gln) + L-glutamine + ATP + H2O = L-glutaminyl-tRNA(Gln) + L-glutamate + ADP + phosphate + H(+). In terms of biological role, allows the formation of correctly charged Gln-tRNA(Gln) through the transamidation of misacylated Glu-tRNA(Gln) in organisms which lack glutaminyl-tRNA synthetase. The reaction takes place in the presence of glutamine and ATP through an activated gamma-phospho-Glu-tRNA(Gln). The sequence is that of Glutamyl-tRNA(Gln) amidotransferase subunit A from Staphylococcus saprophyticus subsp. saprophyticus (strain ATCC 15305 / DSM 20229 / NCIMB 8711 / NCTC 7292 / S-41).